The chain runs to 100 residues: Large ribosomal subunit protein bL21 (100 aa).

It belongs to the bacterial ribosomal protein bL21 family. In terms of assembly, part of the 50S ribosomal subunit. Contacts protein L20.

In terms of biological role, this protein binds to 23S rRNA in the presence of protein L20. This Ureaplasma parvum serovar 3 (strain ATCC 27815 / 27 / NCTC 11736) protein is Large ribosomal subunit protein bL21.